The following is a 294-amino-acid chain: UDP-3-O-acyl-N-acetylglucosamine deacetylase (294 aa).

Zn(2+) is bound by residues histidine 75, histidine 232, and aspartate 236. Histidine 259 (proton donor) is an active-site residue.

This sequence belongs to the LpxC family. It depends on Zn(2+) as a cofactor.

It catalyses the reaction a UDP-3-O-[(3R)-3-hydroxyacyl]-N-acetyl-alpha-D-glucosamine + H2O = a UDP-3-O-[(3R)-3-hydroxyacyl]-alpha-D-glucosamine + acetate. It functions in the pathway glycolipid biosynthesis; lipid IV(A) biosynthesis; lipid IV(A) from (3R)-3-hydroxytetradecanoyl-[acyl-carrier-protein] and UDP-N-acetyl-alpha-D-glucosamine: step 2/6. In terms of biological role, catalyzes the hydrolysis of UDP-3-O-myristoyl-N-acetylglucosamine to form UDP-3-O-myristoylglucosamine and acetate, the committed step in lipid A biosynthesis. This chain is UDP-3-O-acyl-N-acetylglucosamine deacetylase, found in Sulfurimonas denitrificans (strain ATCC 33889 / DSM 1251) (Thiomicrospira denitrificans (strain ATCC 33889 / DSM 1251)).